The following is a 246-amino-acid chain: 1-(5-phosphoribosyl)-5-[(5-phosphoribosylamino)methylideneamino] imidazole-4-carboxamide isomerase (246 aa).

Residue Asp10 is the Proton acceptor of the active site. The Proton donor role is filled by Asp135.

It belongs to the HisA/HisF family.

It localises to the cytoplasm. The enzyme catalyses 1-(5-phospho-beta-D-ribosyl)-5-[(5-phospho-beta-D-ribosylamino)methylideneamino]imidazole-4-carboxamide = 5-[(5-phospho-1-deoxy-D-ribulos-1-ylimino)methylamino]-1-(5-phospho-beta-D-ribosyl)imidazole-4-carboxamide. The protein operates within amino-acid biosynthesis; L-histidine biosynthesis; L-histidine from 5-phospho-alpha-D-ribose 1-diphosphate: step 4/9. In Methanococcoides burtonii (strain DSM 6242 / NBRC 107633 / OCM 468 / ACE-M), this protein is 1-(5-phosphoribosyl)-5-[(5-phosphoribosylamino)methylideneamino] imidazole-4-carboxamide isomerase.